Reading from the N-terminus, the 242-residue chain is Thymocyte nuclear protein 1 (242 aa).

Residues 1–64 (MPWPSRKRDK…KKAKESDSGG (64 aa)) are disordered. Positions 6 to 10 (RKRDK) match the Nuclear localization signal motif. Residues 10 to 27 (KGAVADKKEPDAKIAKTE) are compositionally biased toward basic and acidic residues. Positions 28–37 (EETEDKEEEE) are enriched in acidic residues.

Undergoes proteolytic processing during lymphocyte apoptosis. Post-translationally, phosphorylated. In terms of tissue distribution, expressed at high levels in bursa of fabricus, thymus and spleen. Also found in the liver, intestine, heart and brain.

It localises to the nucleus. Functionally, specifically binds 5-hydroxymethylcytosine (5hmC), suggesting that it acts as a specific reader of 5hmC. The chain is Thymocyte nuclear protein 1 (THYN1) from Gallus gallus (Chicken).